The sequence spans 371 residues: 3-methyl-D-ornithine--L-lysine ligase (371 aa).

Lys18 contacts ATP. 19 to 20 provides a ligand contact to L-lysine; sequence LQ. Residues Asp39, 57 to 58, and 80 to 81 contribute to the ATP site; these read NI and EN. An L-lysine-binding site is contributed by Glu80. The ATP-grasp domain maps to 93–277; it reads EKFSCPVLFD…LIELLFRAFN (185 aa). ADP is bound by residues Lys112, Lys139, Ser146, and 168–171; that span reads EEYV. D-ornithine-binding positions include 177–179 and Asp233; that span reads SLE. Mg(2+) contacts are provided by Glu235, Glu247, and Asp249. Glu247 is an ADP binding site. Residues 251–256 and Glu310 each bind D-ornithine; that span reads RFPSQT. Residues Ser254 and Glu310 each coordinate L-lysine.

This sequence belongs to the PylC family. Mg(2+) serves as cofactor.

It catalyses the reaction (3R)-3-methyl-D-ornithine + L-lysine + ATP = (3R)-3-methyl-D-ornithyl-N(6)-L-lysine + ADP + phosphate + H(+). It functions in the pathway amino-acid biosynthesis; L-pyrrolysine biosynthesis. In terms of biological role, is required for the biosynthesis of pyrrolysine. Catalyzes the ATP-dependent ligation between (3R)-3-methyl-D-ornithine and L-lysine, leading to (3R)-3-methyl-D-ornithyl-N6-L-lysine. Is also involved in the synthesis of pyrroline-carboxy-lysine (Pcl), a demethylated form of pyrrolysine that is generated by the pyrrolysine biosynthetic enzymes when the growth media is supplemented with D-ornithine. The polypeptide is 3-methyl-D-ornithine--L-lysine ligase (Methanosarcina mazei (strain ATCC BAA-159 / DSM 3647 / Goe1 / Go1 / JCM 11833 / OCM 88) (Methanosarcina frisia)).